A 262-amino-acid chain; its full sequence is tRNA pseudouridine synthase A (262 aa).

Catalysis depends on aspartate 56, which acts as the Nucleophile. Tyrosine 114 contacts substrate.

It belongs to the tRNA pseudouridine synthase TruA family. As to quaternary structure, homodimer.

It catalyses the reaction uridine(38/39/40) in tRNA = pseudouridine(38/39/40) in tRNA. In terms of biological role, formation of pseudouridine at positions 38, 39 and 40 in the anticodon stem and loop of transfer RNAs. The sequence is that of tRNA pseudouridine synthase A from Lactiplantibacillus plantarum (strain ATCC BAA-793 / NCIMB 8826 / WCFS1) (Lactobacillus plantarum).